Reading from the N-terminus, the 524-residue chain is Serine/threonine-protein phosphatase 2A 56 kDa regulatory subunit gamma isoform (524 aa).

Position 1 is an N-acetylmethionine (Met-1). The Nuclear localization signal signature appears at 472–489 (RKTVSDEARQAQKDPKKE). The tract at residues 476–524 (SDEARQAQKDPKKERPLARRKSELPQDPHTKKALEAHCRADELVPQDGR) is disordered.

This sequence belongs to the phosphatase 2A regulatory subunit B56 family. As to quaternary structure, PP2A consists of a common heterodimeric core enzyme, composed of PPP2CA a 36 kDa catalytic subunit (subunit C) and PPP2R1A a 65 kDa constant regulatory subunit (PR65 or subunit A), that associates with a variety of regulatory subunits. Proteins that associate with the core dimer include three families of regulatory subunits B (the R2/B/PR55/B55, R3/B''/PR72/PR130/PR59 and R5/B'/B56 families), the 48 kDa variable regulatory subunit, viral proteins, and cell signaling molecules. Interacts with SGO1. Interacts with SGO1; the interaction is direct. May interact with TP53. Interacts with IER3 and/or ERK kinases; regulates ERK dephosphorylation Interacts with CIP2A; this interaction stabilizes CIP2A. Highly expressed in testis, heart and spleen. Also found in brain and skeletal muscle.

Its subcellular location is the nucleus. It localises to the chromosome. The protein localises to the centromere. Its function is as follows. The B regulatory subunit might modulate substrate selectivity and catalytic activity, and might also direct the localization of the catalytic enzyme to a particular subcellular compartment. The PP2A-PPP2R5C holoenzyme may activate TP53 and play a role in DNA damage-induced inhibition of cell proliferation. PP2A-PPP2R5C may also regulate the ERK signaling pathway through ERK dephosphorylation. This is Serine/threonine-protein phosphatase 2A 56 kDa regulatory subunit gamma isoform (PPP2R5C) from Oryctolagus cuniculus (Rabbit).